Here is an 882-residue protein sequence, read N- to C-terminus: DNA mismatch repair protein MutS (882 aa).

ATP is bound at residue 629 to 636 (GPNMGGKS).

It belongs to the DNA mismatch repair MutS family.

In terms of biological role, this protein is involved in the repair of mismatches in DNA. It is possible that it carries out the mismatch recognition step. This protein has a weak ATPase activity. The sequence is that of DNA mismatch repair protein MutS from Ralstonia nicotianae (strain ATCC BAA-1114 / GMI1000) (Ralstonia solanacearum).